Reading from the N-terminus, the 454-residue chain is GA-binding protein alpha chain (454 aa).

A PNT domain is found at 168 to 251; it reads AALEGYRKEQ…SHLELLRKYV (84 aa). The interval 295-316 is disordered; sequence KVQRSPRISGEDRSSPGNRTGN. Residue Ser-303 is modified to Phosphoserine. Residues 320–400 constitute a DNA-binding region (ETS); that stretch reads IQLWQFLLEL…QGKRFVYKFV (81 aa).

This sequence belongs to the ETS family. In terms of assembly, heterotetramer of two alpha and two beta subunits. As to expression, ubiquitous.

It localises to the nucleus. Its function is as follows. Transcription factor capable of interacting with purine rich repeats (GA repeats). Positively regulates transcription of transcriptional repressor Rhit/Zpf13. In Mus musculus (Mouse), this protein is GA-binding protein alpha chain (Gabpa).